The sequence spans 141 residues: Hemoglobin subunit alpha-D (141 aa).

The region spanning 1–141 (MLTAEDKKLI…VAAVLAGKYR (141 aa)) is the Globin domain. Positions 58 and 87 each coordinate heme b.

The protein belongs to the globin family. Heterotetramer of two alpha-D chains and two beta chains. In terms of tissue distribution, red blood cells.

Involved in oxygen transport from the lung to the various peripheral tissues. The chain is Hemoglobin subunit alpha-D (HBAD) from Coturnix japonica (Japanese quail).